The primary structure comprises 432 residues: EF-hand calcium-binding domain-containing protein 3 (432 aa).

2 consecutive EF-hand domains span residues 45 to 80 (AQLE…LGMN) and 81 to 116 (LNTY…KKLF). Ca(2+)-binding residues include Asp94, Asp96, Asp98, Lys100, and Asp105. Tyr273 carries the phosphotyrosine modification. The interval 394-432 (SMNKSSPSNSGLSSPSDFSESDPETGRKRKRKSSRGFRQ) is disordered. Low complexity predominate over residues 395-411 (MNKSSPSNSGLSSPSDF). Basic residues predominate over residues 420–432 (RKRKRKSSRGFRQ).

The polypeptide is EF-hand calcium-binding domain-containing protein 3 (Efcab3) (Mus musculus (Mouse)).